A 372-amino-acid polypeptide reads, in one-letter code: Zinc finger protein dpff-1 (372 aa).

A disordered region spans residues 108–204; it reads VGPTTESVSD…SRSIVKETKY (97 aa). The span at 109–131 shows a compositional bias: polar residues; sequence GPTTESVSDSSNDSTTIRPSRQT. Basic and acidic residues predominate over residues 132–141; the sequence is QIKEEYRDDY. The span at 142–158 shows a compositional bias: acidic residues; the sequence is VLDDELSPDEFGSDEDD. Over residues 184–196 the composition is skewed to polar residues; the sequence is TTRSSVSRLTPSR. A C2H2-type zinc finger spans residues 212–235; the sequence is YPCDKCSAKYKSLAGLSYHQSYLH. 2 consecutive PHD-type zinc fingers follow at residues 256–314 and 316–361; these read SCDF…CKSC and ICGT…CQVE.

Belongs to the requiem/DPF family.

The protein resides in the nucleus. It localises to the cytoplasm. Probable transcription factor, involved in meiosis and stress protection. The chain is Zinc finger protein dpff-1 from Caenorhabditis elegans.